Here is a 272-residue protein sequence, read N- to C-terminus: Putative B3 domain-containing protein Os02g0455900 (272 aa).

The TF-B3 DNA-binding region spans G30–C134. The segment at T189–D227 is disordered.

The protein localises to the nucleus. This is Putative B3 domain-containing protein Os02g0455900 from Oryza sativa subsp. japonica (Rice).